Reading from the N-terminus, the 509-residue chain is ATP synthase subunit alpha (509 aa).

169-176 (GDRQTGKT) contributes to the ATP binding site.

The protein belongs to the ATPase alpha/beta chains family. As to quaternary structure, F-type ATPases have 2 components, CF(1) - the catalytic core - and CF(0) - the membrane proton channel. CF(1) has five subunits: alpha(3), beta(3), gamma(1), delta(1), epsilon(1). CF(0) has three main subunits: a(1), b(2) and c(9-12). The alpha and beta chains form an alternating ring which encloses part of the gamma chain. CF(1) is attached to CF(0) by a central stalk formed by the gamma and epsilon chains, while a peripheral stalk is formed by the delta and b chains.

The protein resides in the cell inner membrane. It catalyses the reaction ATP + H2O + 4 H(+)(in) = ADP + phosphate + 5 H(+)(out). Produces ATP from ADP in the presence of a proton gradient across the membrane. The alpha chain is a regulatory subunit. The sequence is that of ATP synthase subunit alpha from Zymomonas mobilis subsp. mobilis (strain ATCC 31821 / ZM4 / CP4).